Here is a 200-residue protein sequence, read N- to C-terminus: NAD(P)H dehydrogenase (quinone) (200 aa).

Residues 4–191 (VLVLYYSSYG…DIARYQGKHV (188 aa)) enclose the Flavodoxin-like domain. Residues 10-15 (SSYGHV) and 79-81 (TRF) contribute to the FMN site. Tyr-12 serves as a coordination point for NAD(+). Trp-99 is a binding site for substrate. Residues 114 to 120 (STGTQHG) and His-135 contribute to the FMN site.

Belongs to the WrbA family. The cofactor is FMN.

The enzyme catalyses a quinone + NADH + H(+) = a quinol + NAD(+). It catalyses the reaction a quinone + NADPH + H(+) = a quinol + NADP(+). This Burkholderia cenocepacia (strain ATCC BAA-245 / DSM 16553 / LMG 16656 / NCTC 13227 / J2315 / CF5610) (Burkholderia cepacia (strain J2315)) protein is NAD(P)H dehydrogenase (quinone).